A 449-amino-acid chain; its full sequence is Adenylosuccinate lyase (449 aa).

N(6)-(1,2-dicarboxyethyl)-AMP contacts are provided by residues 9-10 (RY), 75-77 (KHD), and 102-103 (TS). The active-site Proton donor/acceptor is the histidine 150. Glutamine 224 contacts N(6)-(1,2-dicarboxyethyl)-AMP. Residue serine 275 is the Proton donor/acceptor of the active site. N(6)-(1,2-dicarboxyethyl)-AMP is bound by residues serine 276, 281–283 (KMN), and 320–324 (SSERI).

Belongs to the lyase 1 family. Adenylosuccinate lyase subfamily. As to quaternary structure, homotetramer. Residues from neighboring subunits contribute catalytic and substrate-binding residues to each active site.

The enzyme catalyses N(6)-(1,2-dicarboxyethyl)-AMP = fumarate + AMP. It catalyses the reaction (2S)-2-[5-amino-1-(5-phospho-beta-D-ribosyl)imidazole-4-carboxamido]succinate = 5-amino-1-(5-phospho-beta-D-ribosyl)imidazole-4-carboxamide + fumarate. Its pathway is purine metabolism; AMP biosynthesis via de novo pathway; AMP from IMP: step 2/2. It functions in the pathway purine metabolism; IMP biosynthesis via de novo pathway; 5-amino-1-(5-phospho-D-ribosyl)imidazole-4-carboxamide from 5-amino-1-(5-phospho-D-ribosyl)imidazole-4-carboxylate: step 2/2. Its function is as follows. Catalyzes two reactions in de novo purine nucleotide biosynthesis. Catalyzes the breakdown of 5-aminoimidazole- (N-succinylocarboxamide) ribotide (SAICAR or 2-[5-amino-1-(5-phospho-beta-D-ribosyl)imidazole-4-carboxamido]succinate) to 5-aminoimidazole-4-carboxamide ribotide (AICAR or 5-amino-1-(5-phospho-beta-D-ribosyl)imidazole-4-carboxamide) and fumarate, and of adenylosuccinate (ADS or N(6)-(1,2-dicarboxyethyl)-AMP) to adenosine monophosphate (AMP) and fumarate. The chain is Adenylosuccinate lyase (purB) from Methanothermobacter thermautotrophicus (strain ATCC 29096 / DSM 1053 / JCM 10044 / NBRC 100330 / Delta H) (Methanobacterium thermoautotrophicum).